The following is a 721-amino-acid chain: Pre-mRNA-splicing ATP-dependent RNA helicase PRP28 (721 aa).

Residues 12–134 (KKAADTAAAK…SAEDIEATLL (123 aa)) are disordered. Positions 26–63 (PKAERERLAAEKAKKEEDDKKRKASEEEQKRKEEEQKW) are enriched in basic and acidic residues. Over residues 64–77 (RSNGSSRPNESNGS) the composition is skewed to polar residues. Basic and acidic residues predominate over residues 88 to 104 (NDGRDDRERDRDRDQGR). The Q motif signature appears at 288–316 (RSWQESNLPQRLLNIVDDVGYKDPSPIQR). The Helicase ATP-binding domain maps to 319 to 522 (IPIALQARDL…KKYLRRPAIV (204 aa)). 332-339 (AVTGSGKT) serves as a coordination point for ATP. Residues 445–448 (DEAD) carry the DEAD box motif. The Helicase C-terminal domain occupies 533–696 (TVEQRVEFVS…KVPEELRRHE (164 aa)). The tract at residues 685-721 (ISKVPEELRRHEAAQSKPVRGAKKDKDEGSGKGNWQH) is disordered. Basic and acidic residues predominate over residues 688 to 698 (VPEELRRHEAA).

Belongs to the DEAD box helicase family. DDX23/PRP28 subfamily. As to quaternary structure, component of the U5 snRNP complex.

It localises to the cytoplasm. The protein resides in the nucleus. It carries out the reaction ATP + H2O = ADP + phosphate + H(+). Its function is as follows. ATP-dependent RNA helicase involved in mRNA splicing. May destabilize the U1/5'-splice site duplex to permit an effective competition for the 5'-splice site by the U6 snRNA, resulting in the switch between U1 and U6 at the 5'-splice site. May also act to unwind the U4/U6 base-pairing interaction in the U4/U6/U5 snRNP, facilitating the first covalent step of splicing. In Gibberella zeae (strain ATCC MYA-4620 / CBS 123657 / FGSC 9075 / NRRL 31084 / PH-1) (Wheat head blight fungus), this protein is Pre-mRNA-splicing ATP-dependent RNA helicase PRP28 (PRP28).